The primary structure comprises 417 residues: Tyrosine--tRNA ligase (417 aa).

Tyr-34 serves as a coordination point for L-tyrosine. The short motif at 39-48 (PTGDSMHIGH) is the 'HIGH' region element. L-tyrosine contacts are provided by Tyr-165 and Gln-169. The 'KMSKS' region motif lies at 227-231 (KFGKS). Position 230 (Lys-230) interacts with ATP. Residues 349 to 417 (ENIVLWLVDT…KKKYFLARVK (69 aa)) enclose the S4 RNA-binding domain.

Belongs to the class-I aminoacyl-tRNA synthetase family. TyrS type 1 subfamily. In terms of assembly, homodimer.

The protein localises to the cytoplasm. It carries out the reaction tRNA(Tyr) + L-tyrosine + ATP = L-tyrosyl-tRNA(Tyr) + AMP + diphosphate + H(+). Catalyzes the attachment of tyrosine to tRNA(Tyr) in a two-step reaction: tyrosine is first activated by ATP to form Tyr-AMP and then transferred to the acceptor end of tRNA(Tyr). This chain is Tyrosine--tRNA ligase, found in Pediococcus pentosaceus (strain ATCC 25745 / CCUG 21536 / LMG 10740 / 183-1w).